The sequence spans 2193 residues: Genome polyprotein (2193 aa).

The segment at methionine 1–serine 23 is disordered. Glycine 2 is lipidated: N-myristoyl glycine; by host. Residues glycine 2–glutamine 1503 are Cytoplasmic-facing. Positions glycine 566 to leucine 588 are amphipathic alpha-helix. Active-site for protease 2A activity residues include histidine 883 and aspartate 901. Zn(2+) contacts are provided by cysteine 918 and cysteine 920. The active-site For protease 2A activity is cysteine 972. Residues cysteine 978 and histidine 980 each contribute to the Zn(2+) site. The tract at residues serine 1112 to leucine 1184 is membrane-binding. Residues serine 1112–threonine 1250 are oligomerization. The RNA-binding stretch occupies residues serine 1133–serine 1137. The SF3 helicase domain maps to glutamate 1216–alanine 1374. Glycine 1240–serine 1247 lines the ATP pocket. 3 residues coordinate Zn(2+): cysteine 1381, cysteine 1392, and cysteine 1397. The C4-type; degenerate zinc-finger motif lies at cysteine 1381–cysteine 1397. Residues glutamate 1424–isoleucine 1431 are RNA-binding. The interval isoleucine 1435–glutamine 1440 is oligomerization. Residues serine 1504 to tyrosine 1519 lie within the membrane without spanning it. Over lysine 1520–phenylalanine 2193 the chain is Cytoplasmic. Tyrosine 1529 carries the post-translational modification O-(5'-phospho-RNA)-tyrosine. A Peptidase C3 domain is found at glycine 1549 to phenylalanine 1727. Active-site for protease 3C activity residues include histidine 1588, glutamate 1619, and cysteine 1695. Residues glycine 1958 to glutamate 2074 form the RdRp catalytic domain. Mg(2+)-binding residues include aspartate 1964 and aspartate 2060.

Belongs to the picornaviruses polyprotein family. In terms of assembly, interacts with capsid protein VP1 and capsid protein VP3 to form heterotrimeric protomers. As to quaternary structure, interacts with capsid protein VP0, and capsid protein VP3 to form heterotrimeric protomers. Five protomers subsequently associate to form pentamers which serve as building blocks for the capsid. Interacts with capsid protein VP2, capsid protein VP3 and capsid protein VP4 following cleavage of capsid protein VP0. Interacts with capsid protein VP1 and capsid protein VP3 in the mature capsid. In terms of assembly, interacts with capsid protein VP0 and capsid protein VP1 to form heterotrimeric protomers. Five protomers subsequently associate to form pentamers which serve as building blocks for the capsid. Interacts with capsid protein VP4 in the mature capsid. Interacts with protein 2C; this interaction may be important for virion morphogenesis. As to quaternary structure, interacts with capsid protein VP1 and capsid protein VP3. Homodimer. In terms of assembly, homohexamer; forms a hexameric ring structure with 6-fold symmetry characteristic of AAA+ ATPases. Interacts (via N-terminus) with host RTN3 (via reticulon domain); this interaction is important for viral replication. Interacts with capsid protein VP3; this interaction may be important for virion morphogenesis. As to quaternary structure, interacts with protein 3CD. Homodimer. Interacts with host GBF1. Interacts (via GOLD domain) with host ACBD3 (via GOLD domain); this interaction allows the formation of a viral protein 3A/ACBD3 heterotetramer with a 2:2 stoichiometry, which will stimulate the recruitment of host PI4KB in order to synthesize PI4P at the viral RNA replication sites. In terms of assembly, interacts with RNA-directed RNA polymerase. As to quaternary structure, interacts with host IFIH1/MDA5; this interaction inhibits host IFIH1. Protein 3CD: Interacts with protein 3AB and with RNA-directed RNA polymerase. In terms of assembly, interacts with Viral protein genome-linked and with protein 3CD. Mg(2+) is required as a cofactor. Post-translationally, specific enzymatic cleavages in vivo by the viral proteases yield processing intermediates and the mature proteins. In terms of processing, myristoylation is required for the formation of pentamers during virus assembly. Further assembly of 12 pentamers and a molecule of genomic RNA generates the provirion. During virion maturation, immature virions are rendered infectious following cleavage of VP0 into VP4 and VP2. This maturation seems to be an autocatalytic event triggered by the presence of RNA in the capsid and it is followed by a conformational change infectious virion. Post-translationally, myristoylation is required during RNA encapsidation and formation of the mature virus particle. In terms of processing, VPg is uridylylated by the polymerase into VPg-pUpU. This acts as a nucleotide-peptide primer for the genomic RNA replication.

It is found in the virion. The protein localises to the host cytoplasm. Its subcellular location is the host cytoplasmic vesicle membrane. The protein resides in the host nucleus. It catalyses the reaction a ribonucleoside 5'-triphosphate + H2O = a ribonucleoside 5'-diphosphate + phosphate + H(+). It carries out the reaction Selective cleavage of Tyr-|-Gly bond in the picornavirus polyprotein.. The catalysed reaction is RNA(n) + a ribonucleoside 5'-triphosphate = RNA(n+1) + diphosphate. The enzyme catalyses Selective cleavage of Gln-|-Gly bond in the poliovirus polyprotein. In other picornavirus reactions Glu may be substituted for Gln, and Ser or Thr for Gly.. Its activity is regulated as follows. Replication or transcription is subject to high level of random mutations by the nucleotide analog ribavirin. Functionally, forms an icosahedral capsid of pseudo T=3 symmetry with capsid proteins VP2 and VP3. The capsid is 300 Angstroms in diameter, composed of 60 copies of each capsid protein and enclosing the viral positive strand RNA genome. Capsid protein VP1 mainly forms the vertices of the capsid. Capsid protein VP1 interacts with host cell receptor to provide virion attachment to target host cells. This attachment induces virion internalization. After binding to its receptor, the capsid undergoes conformational changes. Capsid protein VP1 N-terminus (that contains an amphipathic alpha-helix) and capsid protein VP4 are externalized. Together, they shape a pore in the host membrane through which viral genome is translocated to host cell cytoplasm. Its function is as follows. Forms an icosahedral capsid of pseudo T=3 symmetry with capsid proteins VP2 and VP3. The capsid is 300 Angstroms in diameter, composed of 60 copies of each capsid protein and enclosing the viral positive strand RNA genome. Lies on the inner surface of the capsid shell. After binding to the host receptor, the capsid undergoes conformational changes. Capsid protein VP4 is released, Capsid protein VP1 N-terminus is externalized, and together, they shape a pore in the host membrane through which the viral genome is translocated into the host cell cytoplasm. In terms of biological role, component of immature procapsids, which is cleaved into capsid proteins VP4 and VP2 after maturation. Allows the capsid to remain inactive before the maturation step. Functionally, cysteine protease that cleaves viral polyprotein and specific host proteins. It is responsible for the autocatalytic cleavage between the P1 and P2 regions, which is the first cleavage occurring in the polyprotein. Also cleaves the host translation initiation factor EIF4G1, in order to shut down the capped cellular mRNA translation. Inhibits the host nucleus-cytoplasm protein and RNA trafficking by cleaving host members of the nuclear pores. Counteracts stress granule formation probably by antagonizing its assembly or promoting its dissassembly. Cleaves and inhibits host IFIH1/MDA5, thereby inhibiting the type-I IFN production and the establishment of the antiviral state. Cleaves and inhibits host MAVS, thereby inhibiting the type-I IFN production and the establishment of the antiviral state. Its function is as follows. Plays an essential role in the virus replication cycle by acting as a viroporin. Creates a pore in the host endoplasmic reticulum and as a consequence releases Ca2+ in the cytoplasm of infected cell. In turn, high levels of cytoplasmic calcium may trigger membrane trafficking and transport of viral ER-associated proteins to viroplasms, sites of viral genome replication. Induces and associates with structural rearrangements of intracellular membranes. Displays RNA-binding, nucleotide binding and NTPase activities. May play a role in virion morphogenesis and viral RNA encapsidation by interacting with the capsid protein VP3. In terms of biological role, localizes the viral replication complex to the surface of membranous vesicles. Together with protein 3CD binds the Cis-Active RNA Element (CRE) which is involved in RNA synthesis initiation. Acts as a cofactor to stimulate the activity of 3D polymerase, maybe through a nucleid acid chaperone activity. Functionally, localizes the viral replication complex to the surface of membranous vesicles. It inhibits host cell endoplasmic reticulum-to-Golgi apparatus transport and causes the disassembly of the Golgi complex, possibly through GBF1 interaction. This would result in depletion of MHC, trail receptors and IFN receptors at the host cell surface. Plays an essential role in viral RNA replication by recruiting ACBD3 and PI4KB at the viral replication sites, thereby allowing the formation of the rearranged membranous structures where viral replication takes place. Its function is as follows. Acts as a primer for viral RNA replication and remains covalently bound to viral genomic RNA. VPg is uridylylated prior to priming replication into VPg-pUpU. The oriI viral genomic sequence may act as a template for this. The VPg-pUpU is then used as primer on the genomic RNA poly(A) by the RNA-dependent RNA polymerase to replicate the viral genome. During genome replication, the VPg-RNA linkage is removed by the host TDP2, thereby accelerating replication. During the late stage of the replication cycle, host TDP2 is excluded from sites of viral RNA synthesis and encapsidation, allowing for the generation of progeny virions. Involved in the viral replication complex and viral polypeptide maturation. It exhibits protease activity with a specificity and catalytic efficiency that is different from protease 3C. Protein 3CD lacks polymerase activity. Protein 3CD binds to the 5'UTR of the viral genome. In terms of biological role, major viral protease that mediates proteolytic processing of the polyprotein. Cleaves host EIF5B, contributing to host translation shutoff. Also cleaves host PABPC1, contributing to host translation shutoff. Binds and inhibits host IFIH1/MDA5, thereby inhibiting the type-I IFN production and the establishment of the antiviral state. Cleaves host MAP3K7/TAK1, resulting in inhibition of TRAF6-triggered NF-kappa-B induction. Cleaves host NLRP1, triggers host N-glycine-mediated degradation of the autoinhibitory NLRP1 N-terminal fragment. Functionally, replicates the viral genomic RNA on the surface of intracellular membranes. May form linear arrays of subunits that propagate along a strong head-to-tail interaction called interface-I. Covalently attaches UMP to a tyrosine of VPg, which is used to prime RNA synthesis. The positive stranded RNA genome is first replicated at virus induced membranous vesicles, creating a dsRNA genomic replication form. This dsRNA is then used as template to synthesize positive stranded RNA genomes. ss(+)RNA genomes are either translated, replicated or encapsidated. The protein is Genome polyprotein of Homo sapiens (Human).